The sequence spans 245 residues: 1-(5-phosphoribosyl)-5-[(5-phosphoribosylamino)methylideneamino] imidazole-4-carboxamide isomerase (245 aa).

The Proton acceptor role is filled by Asp7. Asp129 acts as the Proton donor in catalysis.

This sequence belongs to the HisA/HisF family.

It is found in the cytoplasm. It catalyses the reaction 1-(5-phospho-beta-D-ribosyl)-5-[(5-phospho-beta-D-ribosylamino)methylideneamino]imidazole-4-carboxamide = 5-[(5-phospho-1-deoxy-D-ribulos-1-ylimino)methylamino]-1-(5-phospho-beta-D-ribosyl)imidazole-4-carboxamide. The protein operates within amino-acid biosynthesis; L-histidine biosynthesis; L-histidine from 5-phospho-alpha-D-ribose 1-diphosphate: step 4/9. The polypeptide is 1-(5-phosphoribosyl)-5-[(5-phosphoribosylamino)methylideneamino] imidazole-4-carboxamide isomerase (Aliivibrio salmonicida (strain LFI1238) (Vibrio salmonicida (strain LFI1238))).